A 127-amino-acid polypeptide reads, in one-letter code: Vacuolar ATPase assembly integral membrane protein VMA21 (127 aa).

The interval 1 to 28 is disordered; sequence MATRRNPTKESITTSPPPDQQPRQPGEL. Residues 1–45 are Cytoplasmic-facing; it reads MATRRNPTKESITTSPPPDQQPRQPGELEHREAIQLRDLPGYPQQ. A helical transmembrane segment spans residues 46–66; that stretch reads VLWKLIIYSIAVLVLPLSAYF. The Lumenal segment spans residues 67–79; the sequence is YSVNYVFDGNTTY. The helical transmembrane segment at 80–100 threads the bilayer; the sequence is AGATAAITANLILFSYIVVAM. The Cytoplasmic segment spans residues 101-127; sequence REDKGDQEQLREQQQLRGNKEETKKMK. The disordered stretch occupies residues 107 to 127; sequence QEQLREQQQLRGNKEETKKMK. Basic and acidic residues predominate over residues 118 to 127; the sequence is GNKEETKKMK. The short motif at 124–127 is the Prevents secretion from ER element; it reads KKMK.

The protein belongs to the VMA21 family.

The protein resides in the endoplasmic reticulum membrane. The protein localises to the endoplasmic reticulum-Golgi intermediate compartment membrane. It localises to the cytoplasmic vesicle. It is found in the COPII-coated vesicle membrane. Functionally, required for the assembly of the V0 complex of the vacuolar ATPase (V-ATPase) in the endoplasmic reticulum. This is Vacuolar ATPase assembly integral membrane protein VMA21 from Coccidioides immitis (strain RS) (Valley fever fungus).